A 615-amino-acid polypeptide reads, in one-letter code: Leucine aminopeptidase 2-1 (615 aa).

Residues 137-139 (QCQ) and 261-266 (PYGGME) contribute to the substrate site. His290 provides a ligand contact to Zn(2+). Glu291 (proton acceptor) is an active-site residue. Zn(2+)-binding residues include His294 and Glu313. The active-site Proton donor is Tyr380.

The protein belongs to the peptidase M1 family. It depends on Zn(2+) as a cofactor.

The protein resides in the cytoplasm. The protein localises to the nucleus. It carries out the reaction an epoxide + H2O = an ethanediol. In terms of biological role, aminopeptidase that preferentially cleaves di- and tripeptides. Also has low epoxide hydrolase activity (in vitro). Can hydrolyze the epoxide leukotriene LTA(4) but it forms preferentially 5,6-dihydroxy-7,9,11,14-eicosatetraenoic acid rather than the cytokine leukotriene B(4) as the product compared to the homologous mammalian enzyme (in vitro). This is Leucine aminopeptidase 2-1 from Meyerozyma guilliermondii (strain ATCC 6260 / CBS 566 / DSM 6381 / JCM 1539 / NBRC 10279 / NRRL Y-324) (Yeast).